The sequence spans 310 residues: tRNA-cytidine(32) 2-sulfurtransferase (310 aa).

A PP-loop motif motif is present at residues 45–50; sequence SGGKDS. C120, C123, and C211 together coordinate [4Fe-4S] cluster.

It belongs to the TtcA family. Homodimer. It depends on Mg(2+) as a cofactor. [4Fe-4S] cluster serves as cofactor.

It localises to the cytoplasm. It catalyses the reaction cytidine(32) in tRNA + S-sulfanyl-L-cysteinyl-[cysteine desulfurase] + AH2 + ATP = 2-thiocytidine(32) in tRNA + L-cysteinyl-[cysteine desulfurase] + A + AMP + diphosphate + H(+). Its pathway is tRNA modification. Functionally, catalyzes the ATP-dependent 2-thiolation of cytidine in position 32 of tRNA, to form 2-thiocytidine (s(2)C32). The sulfur atoms are provided by the cysteine/cysteine desulfurase (IscS) system. The chain is tRNA-cytidine(32) 2-sulfurtransferase from Shewanella sp. (strain ANA-3).